We begin with the raw amino-acid sequence, 372 residues long: MNINVNIKNIIIDKPLKLDCGQTINNYSLAYETYGSLNENKDNAILIFHALTGDQFVSGINPITKKEGWWSYAVGSGKAIDTDKYFVICANVIGGCMGSYGPSEINPDTNKKYGTTFPVITINDMVNAQFNLLNFFNIEKLFAVMGGSMGGMQTLQFVNNFPDKAKVAIPIACTASHSAQNIAFNELGRQSIMADANWENGDYSNQNKNPNKGLSVARMAAHITYLSKNGLQEKFGRKLQERDDLKFGFDADFQIESYLRYQGSVFVDRFDANSYLYITRAMDYFDLVKEHHGNLSKAFEKTKTKFLIISFTSDWLYPTSENKEIVIALNAIGAEVGFVEIESDKGHDSFLLKVPKFLNTLGDYIKTAYSKN.

Residues 43 to 353 (NAILIFHALT…DKGHDSFLLK (311 aa)) enclose the AB hydrolase-1 domain. Residue Ser148 is the Nucleophile of the active site. Arg218 serves as a coordination point for substrate. Catalysis depends on residues Asp314 and His347. Asp348 serves as a coordination point for substrate.

It belongs to the AB hydrolase superfamily. MetX family. In terms of assembly, homodimer.

Its subcellular location is the cytoplasm. It catalyses the reaction L-homoserine + acetyl-CoA = O-acetyl-L-homoserine + CoA. It participates in amino-acid biosynthesis; L-methionine biosynthesis via de novo pathway; O-acetyl-L-homoserine from L-homoserine: step 1/1. Transfers an acetyl group from acetyl-CoA to L-homoserine, forming acetyl-L-homoserine. The protein is Homoserine O-acetyltransferase of Pelagibacter ubique (strain HTCC1062).